The following is a 185-amino-acid chain: Vomeronasal secretory protein 2 (185 aa).

An N-terminal signal peptide occupies residues 1 to 19 (MKSLLLTVTLSSLVATLQT). An intrachain disulfide couples Cys80 to Cys172.

It belongs to the calycin superfamily. Lipocalin family. Specifically expressed in vomeronasal and posterior glands of the nasal septum, the ducts of which open into the lumen of the vomeronasal organ.

The protein resides in the secreted. Transport of lipophilic molecules, possible pheromone-carrier. The chain is Vomeronasal secretory protein 2 (Lcn4) from Mus musculus (Mouse).